Consider the following 147-residue polypeptide: 6,7-dimethyl-8-ribityllumazine synthase (147 aa).

5-amino-6-(D-ribitylamino)uracil is bound by residues Phe16, 48–50 (TFD), and 73–75 (AVI). Residue 78–79 (DT) coordinates (2S)-2-hydroxy-3-oxobutyl phosphate. The Proton donor role is filled by His81. Leu106 serves as a coordination point for 5-amino-6-(D-ribitylamino)uracil. Arg121 contacts (2S)-2-hydroxy-3-oxobutyl phosphate.

This sequence belongs to the DMRL synthase family.

It catalyses the reaction (2S)-2-hydroxy-3-oxobutyl phosphate + 5-amino-6-(D-ribitylamino)uracil = 6,7-dimethyl-8-(1-D-ribityl)lumazine + phosphate + 2 H2O + H(+). It participates in cofactor biosynthesis; riboflavin biosynthesis; riboflavin from 2-hydroxy-3-oxobutyl phosphate and 5-amino-6-(D-ribitylamino)uracil: step 1/2. Functionally, catalyzes the formation of 6,7-dimethyl-8-ribityllumazine by condensation of 5-amino-6-(D-ribitylamino)uracil with 3,4-dihydroxy-2-butanone 4-phosphate. This is the penultimate step in the biosynthesis of riboflavin. The polypeptide is 6,7-dimethyl-8-ribityllumazine synthase (Aeropyrum pernix (strain ATCC 700893 / DSM 11879 / JCM 9820 / NBRC 100138 / K1)).